The following is a 180-amino-acid chain: Dual-action ribosomal maturation protein DarP (180 aa).

It belongs to the DarP family.

Its subcellular location is the cytoplasm. Its function is as follows. Member of a network of 50S ribosomal subunit biogenesis factors which assembles along the 30S-50S interface, preventing incorrect 23S rRNA structures from forming. Promotes peptidyl transferase center (PTC) maturation. The protein is Dual-action ribosomal maturation protein DarP of Pasteurella multocida (strain Pm70).